The following is a 32-amino-acid chain: Cytochrome b6-f complex subunit 7 (32 aa).

A helical membrane pass occupies residues 5–25 (IFGTAAIFWVLIPAGLLGGAL).

The protein belongs to the PetM family. The 4 large subunits of the cytochrome b6-f complex are cytochrome b6, subunit IV (17 kDa polypeptide, PetD), cytochrome f and the Rieske protein, while the 4 small subunits are PetG, PetL, PetM and PetN. The complex functions as a dimer.

The protein localises to the cellular thylakoid membrane. Functionally, component of the cytochrome b6-f complex, which mediates electron transfer between photosystem II (PSII) and photosystem I (PSI), cyclic electron flow around PSI, and state transitions. The protein is Cytochrome b6-f complex subunit 7 of Prochlorococcus marinus (strain SARG / CCMP1375 / SS120).